The sequence spans 386 residues: Succinate--CoA ligase [ADP-forming] subunit beta (386 aa).

Positions 9–244 (KEILRKYGVP…HDEEDPLETR (236 aa)) constitute an ATP-grasp domain. Residues Lys-46, 53–55 (GRG), Glu-99, Cys-102, and Glu-107 each bind ATP. 2 residues coordinate Mg(2+): Asn-199 and Asp-213. Residues Asn-264 and 321-323 (GIM) each bind substrate.

The protein belongs to the succinate/malate CoA ligase beta subunit family. As to quaternary structure, heterotetramer of two alpha and two beta subunits. The cofactor is Mg(2+).

It catalyses the reaction succinate + ATP + CoA = succinyl-CoA + ADP + phosphate. The catalysed reaction is GTP + succinate + CoA = succinyl-CoA + GDP + phosphate. Its pathway is carbohydrate metabolism; tricarboxylic acid cycle; succinate from succinyl-CoA (ligase route): step 1/1. In terms of biological role, succinyl-CoA synthetase functions in the citric acid cycle (TCA), coupling the hydrolysis of succinyl-CoA to the synthesis of either ATP or GTP and thus represents the only step of substrate-level phosphorylation in the TCA. The beta subunit provides nucleotide specificity of the enzyme and binds the substrate succinate, while the binding sites for coenzyme A and phosphate are found in the alpha subunit. This chain is Succinate--CoA ligase [ADP-forming] subunit beta, found in Rickettsia peacockii (strain Rustic).